We begin with the raw amino-acid sequence, 160 residues long: Nucleotide-binding protein VSAL_I1728 (160 aa).

The protein belongs to the YajQ family.

Its function is as follows. Nucleotide-binding protein. The polypeptide is Nucleotide-binding protein VSAL_I1728 (Aliivibrio salmonicida (strain LFI1238) (Vibrio salmonicida (strain LFI1238))).